The primary structure comprises 269 residues: D-aminoacyl-tRNA deacylase (269 aa).

The protein belongs to the DtdA deacylase family. In terms of assembly, monomer. Zn(2+) serves as cofactor.

The enzyme catalyses a D-aminoacyl-tRNA + H2O = a tRNA + a D-alpha-amino acid + H(+). The catalysed reaction is glycyl-tRNA(Ala) + H2O = tRNA(Ala) + glycine + H(+). Its function is as follows. D-aminoacyl-tRNA deacylase with broad substrate specificity. By recycling D-aminoacyl-tRNA to D-amino acids and free tRNA molecules, this enzyme counteracts the toxicity associated with the formation of D-aminoacyl-tRNA entities in vivo. The polypeptide is D-aminoacyl-tRNA deacylase (Caldivirga maquilingensis (strain ATCC 700844 / DSM 13496 / JCM 10307 / IC-167)).